Here is a 415-residue protein sequence, read N- to C-terminus: Probable disease resistance protein At5g66890 (415 aa).

Residues 8-43 (SFDALPHNLRECFLDMASFLEDQRIIASTIIDLWSA) enclose the NB-ARC domain. 6 LRR repeats span residues 229–251 (SLEKLSLWFCHVVDALNELEDVS), 256–278 (SLQEIEIDYCYNLDELPYWISQV), 280–303 (SLKKLSVTNCNKLCRVIEAIGDLR), 304–326 (DLETLRLSSCASLLELPETIDRL), 328–351 (NLRFLDVSGGFQLKNLPLEIGKLK), and 352–373 (KLEKISMKDCYRCELPDSVKNL). Residues 239–260 (HVVDALNELEDVSETLQSLQEI) adopt a coiled-coil conformation.

Belongs to the disease resistance NB-LRR family.

Possible disease resistance protein. In Arabidopsis thaliana (Mouse-ear cress), this protein is Probable disease resistance protein At5g66890.